The following is a 305-amino-acid chain: Olfactory receptor 4F5 (305 aa).

Residues 1–18 (MVTEFIFLGLSDSQELQT) are Extracellular-facing. Residues 19–42 (FLFMLFFVFYGGIVFGNLLIVITV) form a helical membrane-spanning segment. Topologically, residues 43–50 (VSDSHLHS) are cytoplasmic. Residues 51 to 72 (PMYFLLANLSLIDLSLSSVTAP) form a helical membrane-spanning segment. Residues 73–93 (KMITDFFSQRKVISFKGCLVQ) lie on the Extracellular side of the membrane. Cysteines 90 and 182 form a disulfide. A helical membrane pass occupies residues 94 to 113 (IFLLHFFGGSEMVILIAMGF). Topologically, residues 114-132 (DRYIAICKPLHYTTIMCGN) are cytoplasmic. A helical transmembrane segment spans residues 133 to 151 (ACVGIMAVTWGIGFLHSVS). Topologically, residues 152 to 188 (QLAFAVHLLFCGPNEVDSFYCDLPRVIKLACTDTYRL) are extracellular. The helical transmembrane segment at 189–212 (DIMVIANSGVLTVCSFVLLIISYT) threads the bilayer. Over 213 to 228 (IILMTIQHRPLDKSSK) the chain is Cytoplasmic. A helical membrane pass occupies residues 229 to 251 (ALSTLTAHITVVLLFFGPCVFIY). The Extracellular portion of the chain corresponds to 252–262 (AWPFPIKSLDK). A helical membrane pass occupies residues 263-282 (FLAVFYSVITPLLNPIIYTL). Residues 283 to 305 (RNKDMKTAIRQLRKWDAHSSVKF) are Cytoplasmic-facing.

It belongs to the G-protein coupled receptor 1 family.

It is found in the cell membrane. Functionally, odorant receptor. This chain is Olfactory receptor 4F5 (OR4F5), found in Homo sapiens (Human).